A 215-amino-acid chain; its full sequence is Cytochrome b6 (215 aa).

Residues 32-52 (IFYCFGGLVLTCFLIQVATGF) traverse the membrane as a helical segment. C35 is a heme c binding site. Heme b-binding residues include H86 and H100. Helical transmembrane passes span 90 to 110 (ASMMVLMMVLHVFRVYLTGGF), 116 to 136 (LTWVTGVTLSVVTVSFGVTGY), and 186 to 206 (AHTFVLPLAAAVLMLTHFLMI). Heme b contacts are provided by H187 and H202.

The protein belongs to the cytochrome b family. PetB subfamily. In terms of assembly, the 4 large subunits of the cytochrome b6-f complex are cytochrome b6, subunit IV (17 kDa polypeptide, PetD), cytochrome f and the Rieske protein, while the 4 small subunits are PetG, PetL, PetM and PetN. The complex functions as a dimer. It depends on heme b as a cofactor. The cofactor is heme c.

Its subcellular location is the plastid. It localises to the chloroplast thylakoid membrane. Functionally, component of the cytochrome b6-f complex, which mediates electron transfer between photosystem II (PSII) and photosystem I (PSI), cyclic electron flow around PSI, and state transitions. This chain is Cytochrome b6, found in Phaeodactylum tricornutum (strain CCAP 1055/1).